A 968-amino-acid chain; its full sequence is RNA polymerase-associated protein RapA (968 aa).

In terms of domain architecture, Helicase ATP-binding spans 164-334 (DVGRRHAPRV…FARLRLLDPN (171 aa)). 177–184 (DEVGLGKT) serves as a coordination point for ATP. The short motif at 280–283 (DEAH) is the DEAH box element. In terms of domain architecture, Helicase C-terminal spans 490–685 (RVEWLMGYLT…ALKAQLEQGR (196 aa)).

It belongs to the SNF2/RAD54 helicase family. RapA subfamily. Interacts with the RNAP. Has a higher affinity for the core RNAP than for the holoenzyme. Its ATPase activity is stimulated by binding to RNAP.

Transcription regulator that activates transcription by stimulating RNA polymerase (RNAP) recycling in case of stress conditions such as supercoiled DNA or high salt concentrations. Probably acts by releasing the RNAP, when it is trapped or immobilized on tightly supercoiled DNA. Does not activate transcription on linear DNA. Probably not involved in DNA repair. The protein is RNA polymerase-associated protein RapA of Salmonella choleraesuis (strain SC-B67).